The following is a 92-amino-acid chain: MPRSLKKGPFVDHHLLKKVFEAQESNSKKPIKTWSRRSMIVPDMIGLTIAVHNGQQHVPVLMTEEMVGHKLGEFVVTRNYRGHAADKKAKKK.

Belongs to the universal ribosomal protein uS19 family.

Protein S19 forms a complex with S13 that binds strongly to the 16S ribosomal RNA. This is Small ribosomal subunit protein uS19 from Francisella tularensis subsp. tularensis (strain FSC 198).